The primary structure comprises 94 residues: MSVKGMAIALAVILCATVVQGFPMFKRGRCLCIGPGVKAVKVADIEKASIMYPSNNCDKIEVIITLKENKGQRCLNPKSKQARLIIKKVERKNF.

Residues 1 to 21 form the signal peptide; it reads MSVKGMAIALAVILCATVVQG. At Arg-27 the chain carries Citrulline; by PAD2. Cystine bridges form between Cys-30–Cys-57 and Cys-32–Cys-74.

As to quaternary structure, interacts with TNFAIP6 (via Link domain). In terms of tissue distribution, high levels in peripheral blood leukocytes, pancreas and liver astrocytes. Moderate levels in thymus, spleen and lung. Low levels in placenta, prostate and small intestine. Also found in epidermal basal layer keratinocytes in skin disorders.

Its subcellular location is the secreted. Its function is as follows. Chemotactic for interleukin-activated T-cells but not unstimulated T-cells, neutrophils or monocytes. Induces calcium release in activated T-cells. Binds to CXCR3. May play an important role in CNS diseases which involve T-cell recruitment. May play a role in skin immune responses. In Homo sapiens (Human), this protein is C-X-C motif chemokine 11 (CXCL11).